A 328-amino-acid chain; its full sequence is Dihydroorotate dehydrogenase (quinone), mitochondrial (328 aa).

Residues 21-38 form a helical membrane-spanning segment; that stretch reads AHGLSIAGLKTGLVTGSA. FMN contacts are provided by residues 61–65 and Thr-85; that span reads AGYDK. Lys-65 contacts substrate. 110–114 contacts substrate; that stretch reads NRLGF. FMN contacts are provided by Asn-139 and Asn-170. 170 to 175 contributes to the substrate binding site; sequence NISSPN. Ser-173 (nucleophile) is an active-site residue. 2 residues coordinate FMN: Lys-215 and Ser-243. Residue 244–245 participates in substrate binding; that stretch reads NT. Gly-266 and Gly-295 together coordinate FMN.

The protein belongs to the dihydroorotate dehydrogenase family. Type 2 subfamily. FMN serves as cofactor.

It localises to the mitochondrion inner membrane. The enzyme catalyses (S)-dihydroorotate + a quinone = orotate + a quinol. Its pathway is pyrimidine metabolism; UMP biosynthesis via de novo pathway; orotate from (S)-dihydroorotate (quinone route): step 1/1. Its function is as follows. Catalyzes the conversion of dihydroorotate to orotate with quinone as electron acceptor. The protein is Dihydroorotate dehydrogenase (quinone), mitochondrial (URA1) of Cyclocybe aegerita (Black poplar mushroom).